The sequence spans 613 residues: Phostensin (613 aa).

Residues glutamate 18 to leucine 33 show a composition bias toward basic and acidic residues. Disordered regions lie at residues glutamate 18–glutamine 231 and glycine 266–glycine 500. 5 positions are modified to phosphoserine: serine 54, serine 125, serine 133, serine 175, and serine 195. Composition is skewed to basic and acidic residues over residues arginine 104–leucine 154 and leucine 167–lysine 191. Threonine 199 carries the phosphothreonine modification. Residues threonine 199–serine 221 show a composition bias toward basic and acidic residues. At serine 224 the chain carries Phosphoserine. A compositionally biased stretch (basic and acidic residues) spans glycine 266–tryptophan 282. Residues leucine 295–alanine 309 are compositionally biased toward polar residues. 3 stretches are compositionally biased toward basic and acidic residues: residues alanine 314–lysine 327, lysine 340–glutamate 350, and glutamate 357–leucine 366. Residues serine 368 and serine 432 each carry the phosphoserine modification. Positions glutamine 424–aspartate 446 are enriched in pro residues. Lysine 457 is subject to N6-acetyllysine. Residues proline 476 to proline 499 show a composition bias toward low complexity. 2 positions are modified to phosphoserine: serine 490 and serine 530. Residues glutamine 552–glutamate 595 are disordered. The segment covering proline 567–alanine 578 has biased composition (pro residues). The segment covering proline 580–leucine 589 has biased composition (acidic residues).

As to quaternary structure, interacts with Protein phosphatase 1 (PP1). As to expression, isoform 4 is predominantly expressed in leukocytes and spleen.

The protein localises to the cytoplasm. Its subcellular location is the cytoskeleton. Functionally, may target protein phosphatase 1 to F-actin cytoskeleton. The protein is Phostensin (PPP1R18) of Homo sapiens (Human).